Consider the following 159-residue polypeptide: Large ribosomal subunit protein uL11 (159 aa).

The protein belongs to the universal ribosomal protein uL11 family. In terms of assembly, part of the ribosomal stalk of the 50S ribosomal subunit. Interacts with L10 and the large rRNA to form the base of the stalk. L10 forms an elongated spine to which L12 dimers bind in a sequential fashion forming a multimeric L10(L12)X complex.

Forms part of the ribosomal stalk which helps the ribosome interact with GTP-bound translation factors. This Methanococcus maripaludis (strain C5 / ATCC BAA-1333) protein is Large ribosomal subunit protein uL11.